The primary structure comprises 318 residues: MKNLNLVALPHFVSVENLKNDEVKALIKRAEYFKKSGAVARLTSPVYVTNMFFEDSSRTHTSFEMAERKLGLTVIPFDPAHSSVNKGETLYDTSLVMNALGIDLEVIRHSQNEYYEDLINLKQHQKLNIGVINAGDGSGQHPSQCMLDMMTIHEHFGHFKGLKVAIVGDITNSRVAKSDMELLTRLGAEVYFSGPEYWYSKDFDQYGKYEELDKLIPEMDVMMLLRVQHERHSGDPNEKKFDAHRYHEKYGINHKRYEAMKKDTIIMHPGPINHDVELSGDLVESDKCMFVRQMENGVFMRMAMLEAVLRGRKLGGLE.

The carbamoyl phosphate site is built by arginine 58 and threonine 59. Lysine 86 contacts L-aspartate. The carbamoyl phosphate site is built by arginine 108, histidine 141, and glutamine 144. Positions 174 and 226 each coordinate L-aspartate. Residues glycine 270 and proline 271 each contribute to the carbamoyl phosphate site.

The protein belongs to the aspartate/ornithine carbamoyltransferase superfamily. ATCase family. As to quaternary structure, heterododecamer (2C3:3R2) of six catalytic PyrB chains organized as two trimers (C3), and six regulatory PyrI chains organized as three dimers (R2).

It catalyses the reaction carbamoyl phosphate + L-aspartate = N-carbamoyl-L-aspartate + phosphate + H(+). Its pathway is pyrimidine metabolism; UMP biosynthesis via de novo pathway; (S)-dihydroorotate from bicarbonate: step 2/3. Its function is as follows. Catalyzes the condensation of carbamoyl phosphate and aspartate to form carbamoyl aspartate and inorganic phosphate, the committed step in the de novo pyrimidine nucleotide biosynthesis pathway. This chain is Aspartate carbamoyltransferase catalytic subunit, found in Lactobacillus helveticus (strain DPC 4571).